The following is a 133-amino-acid chain: MAKAANTAAQRARKKVRKNVADGIAHVHASFNNTIITITDRQGNALSWATSGGQGFKGSRKSTPFAAQVAAESAGRVAQDQGIKNLEVRIKGPGPGRESAVRALNNLGIKIQLIEDVTPVPHNGCRPPKRRRI.

This sequence belongs to the universal ribosomal protein uS11 family. Part of the 30S ribosomal subunit. Interacts with proteins S7 and S18. Binds to IF-3.

Its function is as follows. Located on the platform of the 30S subunit, it bridges several disparate RNA helices of the 16S rRNA. Forms part of the Shine-Dalgarno cleft in the 70S ribosome. The protein is Small ribosomal subunit protein uS11 of Ralstonia pickettii (strain 12J).